Consider the following 306-residue polypeptide: UDP-3-O-acyl-N-acetylglucosamine deacetylase (306 aa).

Zn(2+) contacts are provided by histidine 79, histidine 238, and aspartate 242. Histidine 265 serves as the catalytic Proton donor.

Belongs to the LpxC family. Zn(2+) is required as a cofactor.

It carries out the reaction a UDP-3-O-[(3R)-3-hydroxyacyl]-N-acetyl-alpha-D-glucosamine + H2O = a UDP-3-O-[(3R)-3-hydroxyacyl]-alpha-D-glucosamine + acetate. Its pathway is glycolipid biosynthesis; lipid IV(A) biosynthesis; lipid IV(A) from (3R)-3-hydroxytetradecanoyl-[acyl-carrier-protein] and UDP-N-acetyl-alpha-D-glucosamine: step 2/6. Its function is as follows. Catalyzes the hydrolysis of UDP-3-O-myristoyl-N-acetylglucosamine to form UDP-3-O-myristoylglucosamine and acetate, the committed step in lipid A biosynthesis. The chain is UDP-3-O-acyl-N-acetylglucosamine deacetylase from Shewanella denitrificans (strain OS217 / ATCC BAA-1090 / DSM 15013).